The chain runs to 287 residues: Pyridoxal kinase PdxY (287 aa).

Residues serine 9 and 44-45 (MQ) each bind substrate. ATP-binding residues include aspartate 111, alanine 142, glutamate 147, and lysine 180. Aspartate 221 is a binding site for substrate.

It belongs to the pyridoxine kinase family. PdxY subfamily. As to quaternary structure, homodimer. The cofactor is Mg(2+).

The enzyme catalyses pyridoxal + ATP = pyridoxal 5'-phosphate + ADP + H(+). It functions in the pathway cofactor metabolism; pyridoxal 5'-phosphate salvage; pyridoxal 5'-phosphate from pyridoxal: step 1/1. Its function is as follows. Pyridoxal kinase involved in the salvage pathway of pyridoxal 5'-phosphate (PLP). Catalyzes the phosphorylation of pyridoxal to PLP. The polypeptide is Pyridoxal kinase PdxY (Burkholderia pseudomallei (strain K96243)).